Reading from the N-terminus, the 457-residue chain is Multidrug resistance protein MdtK (457 aa).

Residues 1–10 (MQKYISEARL) are Cytoplasmic-facing. Residues 11–31 (LLALAIPVILAQIAQTAMGFV) form a helical membrane-spanning segment. At 32-52 (DTVMAGGYSATDMAAVAIGTS) the chain is on the periplasmic side. Residues 53-73 (IWLPAILFGHGLLLALTPVIA) form a helical membrane-spanning segment. The Cytoplasmic segment spans residues 74–92 (QLNGSGRRERIAHQVRQGF). The helical transmembrane segment at 93-113 (WLAGFVSVLIMLVLWNAGYII) threads the bilayer. At 114 to 126 (RSMENIDPALADK) the chain is on the periplasmic side. Residues 127 to 147 (AVGYLRALLWGAPGYLFFQVA) traverse the membrane as a helical segment. Residues 148–159 (RNQCEGLAKTKP) lie on the Cytoplasmic side of the membrane. Residues 160–180 (GMVMGFIGLLVNIPVNYIFIY) form a helical membrane-spanning segment. Residues 181–188 (GHFGMPEL) lie on the Periplasmic side of the membrane. A helical membrane pass occupies residues 189–209 (GGVGCGVATAAVYWVMFLAMV). At 210–242 (SYIKRARSMRDIRNEKGTAKPDPAVMKRLIQLG) the chain is on the cytoplasmic side. Residues 243–263 (LPIALALFFEVTLFAVVALLV) form a helical membrane-spanning segment. Residues 264 to 275 (SPLGIVDVAGHQ) are Periplasmic-facing. A helical membrane pass occupies residues 276–296 (IALNFSSLMFVLPMSLAAAVT). The Cytoplasmic portion of the chain corresponds to 297 to 313 (IRVGYRLGQGSTLDAQT). Residues 314–334 (AARTGLMVGVCMATLTAIFTV) form a helical membrane-spanning segment. At 335 to 349 (SLREQIALLYNDNPE) the chain is on the periplasmic side. A helical membrane pass occupies residues 350–370 (VVTLAAHLMLLAAVYQISDSI). Topologically, residues 371–386 (QVIGSGILRGYKDTRS) are cytoplasmic. A helical membrane pass occupies residues 387–407 (IFYITFTAYWVLGLPSGYILA). Residues 408–417 (LTDLVVEPMG) are Periplasmic-facing. The helical transmembrane segment at 418–438 (PAGFWIGFIIGLTSAAIMMML) threads the bilayer. Topologically, residues 439–457 (RMRFLQRMPSAIILQRASR) are cytoplasmic.

Belongs to the multi antimicrobial extrusion (MATE) (TC 2.A.66.1) family. MdtK subfamily.

It is found in the cell inner membrane. Multidrug efflux pump that functions probably as a Na(+)/drug antiporter. This chain is Multidrug resistance protein MdtK, found in Shigella boydii serotype 4 (strain Sb227).